The following is a 248-amino-acid chain: MILLISDLHLEQERPDITRAFLDLLAGRAREAESLYILGDFFEVWIGDDAMSPFQLSICKALRELSDSGTRIFLMHGNRDFMLGKGFCKAAGCTLLSDPSVVQLNGEPVLLMHGDSLCTRDEGYIRMRRYLRHPLTLFILRHLPLGTRHKLARKLRNESRAQTRMKANDIVDVTPDEVPRIMQQFGVRTLVHGHTHRPAIHKLQIGDQAARRIVLGDWDRQGWVLQVDEQGFNLSSFDFVPETVALLN.

D7, H9, D40, N78, and H113 together coordinate Mn(2+). 78–79 (NR) provides a ligand contact to substrate. Residues D121, S159, T163, K166, and H194 each contribute to the substrate site. 2 residues coordinate Mn(2+): H194 and H196.

This sequence belongs to the LpxH family. Requires Mn(2+) as cofactor.

It is found in the cell inner membrane. It carries out the reaction UDP-2-N,3-O-bis[(3R)-3-hydroxytetradecanoyl]-alpha-D-glucosamine + H2O = 2-N,3-O-bis[(3R)-3-hydroxytetradecanoyl]-alpha-D-glucosaminyl 1-phosphate + UMP + 2 H(+). Its pathway is glycolipid biosynthesis; lipid IV(A) biosynthesis; lipid IV(A) from (3R)-3-hydroxytetradecanoyl-[acyl-carrier-protein] and UDP-N-acetyl-alpha-D-glucosamine: step 4/6. In terms of biological role, hydrolyzes the pyrophosphate bond of UDP-2,3-diacylglucosamine to yield 2,3-diacylglucosamine 1-phosphate (lipid X) and UMP by catalyzing the attack of water at the alpha-P atom. Involved in the biosynthesis of lipid A, a phosphorylated glycolipid that anchors the lipopolysaccharide to the outer membrane of the cell. The polypeptide is UDP-2,3-diacylglucosamine hydrolase (Pseudomonas syringae pv. syringae (strain B728a)).